The primary structure comprises 338 residues: Taste receptor type 2 member 39 (338 aa).

Residues 1–30 lie on the Extracellular side of the membrane; that stretch reads MLGRCFPPDTKEKQQLRMTKLCDPAESELS. Residues 31–51 form a helical membrane-spanning segment; sequence PFLITLILAVLLAEYLIGIIA. The Cytoplasmic segment spans residues 52 to 74; that stretch reads NGFIMAIHAAEWVQNKAVSTSGR. The helical transmembrane segment at 75–95 threads the bilayer; it reads ILVFLSVSRIALQSLMMLEIT. At 96-116 the chain is on the extracellular side; the sequence is ISSTSLSFYSEDAVYYAFKIS. Residues 117–137 form a helical membrane-spanning segment; that stretch reads FIFLNFCSLWFAAWLSFFYFV. Residues 138–156 are Cytoplasmic-facing; it reads KIANFSYPLFLKLRWRITG. The chain crosses the membrane as a helical span at residues 157–177; that stretch reads LIPWLLWLSVFISFSHSMFCI. Residues 178–205 are Extracellular-facing; it reads NIXTVYCNNSFPIHSSNSTKKTYLSEIN. 2 N-linked (GlcNAc...) asparagine glycosylation sites follow: Asn185 and Asn194. A helical membrane pass occupies residues 206 to 226; that stretch reads VVGLAFFFNLGIVTPLIMFIL. Residues 227-262 lie on the Cytoplasmic side of the membrane; it reads TATLLILSLKRHTLHMGSNATGSNDPSMEAHMGAIK. A helical transmembrane segment spans residues 263 to 283; that stretch reads ATSYFLILYIFNAVALFIYLS. The Extracellular portion of the chain corresponds to 284-291; it reads NMFDINSL. The helical transmembrane segment at 292 to 312 threads the bilayer; sequence WNNLCQIIMAAYPASHSILLI. The Cytoplasmic segment spans residues 313-338; it reads QDNPGLRRAWKRLQLRLHLYPKEWTL.

Belongs to the G-protein coupled receptor T2R family.

Its subcellular location is the membrane. In terms of biological role, receptor that may play a role in the perception of bitterness and is gustducin-linked. May play a role in sensing the chemical composition of the gastrointestinal content. The activity of this receptor may stimulate alpha gustducin, mediate PLC-beta-2 activation and lead to the gating of TRPM5. This Gorilla gorilla gorilla (Western lowland gorilla) protein is Taste receptor type 2 member 39 (TAS2R39).